The primary structure comprises 115 residues: Large ribosomal subunit protein bL20 (115 aa).

This sequence belongs to the bacterial ribosomal protein bL20 family.

Functionally, binds directly to 23S ribosomal RNA and is necessary for the in vitro assembly process of the 50S ribosomal subunit. It is not involved in the protein synthesizing functions of that subunit. This is Large ribosomal subunit protein bL20 from Prochlorococcus marinus (strain MIT 9312).